The primary structure comprises 75 residues: Lividin-3 (75 aa).

The N-terminal stretch at 1–22 (MFTLKKSLLLLFFLGTISLSLC) is a signal peptide. A propeptide spanning residues 23-40 (EEERDADEDEGEMTEEEV) is cleaved from the precursor. Cys-69 and Cys-75 are joined by a disulfide.

Expressed by the skin glands.

It localises to the secreted. Its function is as follows. Antimicrobial peptide. The polypeptide is Lividin-3 (Odorrana livida (Green mountain frog)).